Here is a 261-residue protein sequence, read N- to C-terminus: MGYSKRFALYISVMILIFAIAGCGKSDETKEGSKEEQIKKSFAKTLDMYPIKNLEDLYDKEGYRDGEFKKGDKGTWVISSVMVKQPKGEIMKSRGMYLFLNRNTRTAKGYFIVDETSNDTLKKTEDKEKRYPVKMVNNKIVPIDPINDKGVKKEIENFKFFSQYGDFKELKNYKNGEVSYNSEAPIYSAKYQLKNNDYNVKQLRKRYDISTEKAPKLLLKGTGDLKGSSIGHKDIEFTFVENQEENIFFTDSLEFTSSENY.

Positions 1-22 (MGYSKRFALYISVMILIFAIAG) are cleaved as a signal peptide. The N-palmitoyl cysteine moiety is linked to residue cysteine 23. The S-diacylglycerol cysteine moiety is linked to residue cysteine 23.

It belongs to the staphylococcal tandem lipoprotein family.

The protein resides in the cell membrane. This is an uncharacterized protein from Staphylococcus aureus (strain N315).